The primary structure comprises 119 residues: DNA-directed RNA polymerase subunit omega (119 aa).

This sequence belongs to the RNA polymerase subunit omega family. The RNAP catalytic core consists of 2 alpha, 1 beta, 1 beta' and 1 omega subunit. When a sigma factor is associated with the core the holoenzyme is formed, which can initiate transcription.

The catalysed reaction is RNA(n) + a ribonucleoside 5'-triphosphate = RNA(n+1) + diphosphate. In terms of biological role, promotes RNA polymerase assembly. Latches the N- and C-terminal regions of the beta' subunit thereby facilitating its interaction with the beta and alpha subunits. This is DNA-directed RNA polymerase subunit omega (rpoZ) from Caulobacter vibrioides (strain ATCC 19089 / CIP 103742 / CB 15) (Caulobacter crescentus).